Consider the following 142-residue polypeptide: Large ribosomal subunit protein uL22c (142 aa).

The protein belongs to the universal ribosomal protein uL22 family. As to quaternary structure, part of the 50S ribosomal subunit.

It is found in the plastid. It localises to the chloroplast. In terms of biological role, this protein binds specifically to 23S rRNA. Its function is as follows. The globular domain of the protein is located near the polypeptide exit tunnel on the outside of the subunit, while an extended beta-hairpin is found that lines the wall of the exit tunnel in the center of the 70S ribosome. This Ceratophyllum demersum (Rigid hornwort) protein is Large ribosomal subunit protein uL22c (rpl22).